The following is a 959-amino-acid chain: Vacuolar membrane protease (959 aa).

Residues 1 to 13 are Cytoplasmic-facing; sequence MARLNPLSFTPGP. A helical membrane pass occupies residues 14 to 34; sequence VIFFTCAVYIALFAALLTVHL. At 35 to 378 the chain is on the vacuolar side; the sequence is RVPDYPSKTP…KVFVVFQLHT (344 aa). N-linked (GlcNAc...) asparagine glycans are attached at residues Asn48, Asn102, and Asn105. Positions 128–149 are disordered; sequence GSEDDEPYHSPQSSPPGERRLD. Positions 158 and 170 each coordinate Zn(2+). The active-site Proton acceptor is the Glu204. Positions 205, 230, and 303 each coordinate Zn(2+). Residues 379 to 399 form a helical membrane-spanning segment; it reads MFALCVTLLVVAPLFLIGLTF. Residues 400–432 are Cytoplasmic-facing; the sequence is GLSKADKNYLFARKAYMYSSDDDHPVHLYGWRG. Residues 433–453 traverse the membrane as a helical segment; sequence FFRFPIVFSIATAVVVGLAYL. Residues 454-463 are Vacuolar-facing; that stretch reads MVRLNPLILY. Residues 464–484 traverse the membrane as a helical segment; it reads SSPYAVWSMMLSAWFSVAWFF. Over 485–498 the chain is Cytoplasmic; it reads SRGASAMRPSALQR. A helical membrane pass occupies residues 499–519; the sequence is MYALIWLFAGSFALLAFVTVL. Topologically, residues 520–524 are vacuolar; that stretch reads SNNYQ. The helical transmembrane segment at 525–545 threads the bilayer; sequence VAGGYFALFYFAGIFLALVLS. Residues 546–645 lie on the Cytoplasmic side of the membrane; it reads YLELFFAPTK…YPGEQDWSGK (100 aa). 2 disordered regions span residues 566-594 and 606-635; these read DEPV…DATE and FARH…LKQP. The span at 612-626 shows a compositional bias: basic and acidic residues; sequence RRDSIDDENGNRDEE. A helical transmembrane segment spans residues 646-666; that stretch reads LPGWLWLLQLLLVAPIVVILV. Residues 667 to 688 are Vacuolar-facing; it reads GQIALLLTSALHQTPADGNSSL. N-linked (GlcNAc...) asparagine glycosylation is present at Asn685. The helical transmembrane segment at 689–709 threads the bilayer; the sequence is FVYLAFALLTTLLLAPIGPFI. Topologically, residues 710 to 716 are cytoplasmic; sequence HRFTWHV. The helical transmembrane segment at 717–737 threads the bilayer; it reads PTFVFLVCVATVIYNLVAFPF. At 738-959 the chain is on the vacuolar side; sequence SREHRLKVYF…LVEGFKYFQV (222 aa). 5 N-linked (GlcNAc...) asparagine glycosylation sites follow: Asn785, Asn818, Asn834, Asn864, and Asn899.

The protein belongs to the peptidase M28 family. Zn(2+) serves as cofactor.

Its subcellular location is the vacuole membrane. Functionally, may be involved in vacuolar sorting and osmoregulation. This chain is Vacuolar membrane protease, found in Phaeosphaeria nodorum (strain SN15 / ATCC MYA-4574 / FGSC 10173) (Glume blotch fungus).